The sequence spans 499 residues: BTB/POZ domain-containing protein 16 (499 aa).

The region spanning 143-199 (INDPLVTREAFATALKNLYMQEVKICLDDVLGVLAAAHILQFGSLFQRCVTVMMSGL) is the BTB domain.

In Bos taurus (Bovine), this protein is BTB/POZ domain-containing protein 16 (BTBD16).